Here is a 149-residue protein sequence, read N- to C-terminus: Small ribosomal subunit protein uS11z (149 aa).

The disordered stretch occupies residues 130-149; that stretch reads VTPVPTDSTRRKGGRRGRRL. The segment covering 140–149 has biased composition (basic residues); it reads RKGGRRGRRL.

It belongs to the universal ribosomal protein uS11 family.

This is Small ribosomal subunit protein uS11z from Zea mays (Maize).